Consider the following 74-residue polypeptide: Alpha-elapitoxin-Aa2d (74 aa).

5 cysteine pairs are disulfide-bonded: C3–C21, C14–C42, C27–C31, C46–C57, and C58–C63.

This sequence belongs to the three-finger toxin family. Long-chain subfamily. Type II alpha-neurotoxin sub-subfamily. As to expression, expressed by the venom gland.

It localises to the secreted. Binds with high affinity to muscular (alpha-1/CHRNA1) and neuronal (alpha-7/CHRNA7) nicotinic acetylcholine receptor (nAChR) and inhibits acetylcholine from binding to the receptor, thereby impairing neuromuscular and neuronal transmission. This chain is Alpha-elapitoxin-Aa2d, found in Acanthophis antarcticus (Common death adder).